The sequence spans 257 residues: 5-oxoprolinase subunit A (257 aa).

Belongs to the LamB/PxpA family. Forms a complex composed of PxpA, PxpB and PxpC.

The catalysed reaction is 5-oxo-L-proline + ATP + 2 H2O = L-glutamate + ADP + phosphate + H(+). Catalyzes the cleavage of 5-oxoproline to form L-glutamate coupled to the hydrolysis of ATP to ADP and inorganic phosphate. The chain is 5-oxoprolinase subunit A from Natranaerobius thermophilus (strain ATCC BAA-1301 / DSM 18059 / JW/NM-WN-LF).